A 356-amino-acid chain; its full sequence is DNA polymerase IV (356 aa).

Residues 7 to 188 (IIHIDMDAFY…IPVTKFYGVG (182 aa)) form the UmuC domain. Residues D11 and D106 each contribute to the Mg(2+) site. E107 is an active-site residue.

It belongs to the DNA polymerase type-Y family. Monomer. Requires Mg(2+) as cofactor.

Its subcellular location is the cytoplasm. It carries out the reaction DNA(n) + a 2'-deoxyribonucleoside 5'-triphosphate = DNA(n+1) + diphosphate. Its function is as follows. Poorly processive, error-prone DNA polymerase involved in untargeted mutagenesis. Copies undamaged DNA at stalled replication forks, which arise in vivo from mismatched or misaligned primer ends. These misaligned primers can be extended by PolIV. Exhibits no 3'-5' exonuclease (proofreading) activity. May be involved in translesional synthesis, in conjunction with the beta clamp from PolIII. This chain is DNA polymerase IV, found in Listeria monocytogenes serotype 4a (strain HCC23).